Here is a 330-residue protein sequence, read N- to C-terminus: DNA-directed RNA polymerase subunit alpha (330 aa).

An alpha N-terminal domain (alpha-NTD) region spans residues 1 to 229 (MKNIKFIKPF…DHFNVLVELS (229 aa)). An alpha C-terminal domain (alpha-CTD) region spans residues 245-330 (AHNSVLDLEI…HSVEEDKDKH (86 aa)).

The protein belongs to the RNA polymerase alpha chain family. In terms of assembly, homodimer. The RNAP catalytic core consists of 2 alpha, 1 beta, 1 beta' and 1 omega subunit. When a sigma factor is associated with the core the holoenzyme is formed, which can initiate transcription.

The catalysed reaction is RNA(n) + a ribonucleoside 5'-triphosphate = RNA(n+1) + diphosphate. Functionally, DNA-dependent RNA polymerase catalyzes the transcription of DNA into RNA using the four ribonucleoside triphosphates as substrates. The protein is DNA-directed RNA polymerase subunit alpha of Onion yellows phytoplasma (strain OY-M).